The following is a 141-amino-acid chain: Acetyltransferase YpeA (141 aa).

The N-acetyltransferase domain occupies 1–141 (MEIRVFRQED…GKRLIEDEEY (141 aa)).

This sequence belongs to the acetyltransferase family. YpeA subfamily.

This is Acetyltransferase YpeA from Shigella boydii serotype 4 (strain Sb227).